Consider the following 245-residue polypeptide: Uridylate kinase (245 aa).

Position 16–19 (16–19) interacts with ATP; it reads KLSG. Residues 24–29 form an involved in allosteric activation by GTP region; it reads GDNGFG. Glycine 59 is a UMP binding site. 2 residues coordinate ATP: glycine 60 and arginine 64. Residues aspartate 78 and 139-146 contribute to the UMP site; that span reads NGAPFFTT. The ATP site is built by asparagine 167, tyrosine 173, and aspartate 176.

The protein belongs to the UMP kinase family. In terms of assembly, homohexamer.

It localises to the cytoplasm. The catalysed reaction is UMP + ATP = UDP + ADP. Its pathway is pyrimidine metabolism; CTP biosynthesis via de novo pathway; UDP from UMP (UMPK route): step 1/1. Allosterically activated by GTP. Inhibited by UTP. Its function is as follows. Catalyzes the reversible phosphorylation of UMP to UDP. The chain is Uridylate kinase from Deinococcus radiodurans (strain ATCC 13939 / DSM 20539 / JCM 16871 / CCUG 27074 / LMG 4051 / NBRC 15346 / NCIMB 9279 / VKM B-1422 / R1).